The sequence spans 556 residues: Tripartite motif-containing protein 16 (556 aa).

The disordered stretch occupies residues 1–60 (MAELDLIAPGPLTGVTAHPLAPLGPDPVSAIPVEKEDADPLSKSGEETQEQGHDPAELGA). A compositionally biased stretch (basic and acidic residues) spans 33 to 56 (VEKEDADPLSKSGEETQEQGHDPA). 2 B box-type zinc fingers span residues 64–113 (EDQI…LTEP) and 117–156 (QDLR…STVS). At Ser-107 the chain carries Phosphoserine. Coiled-coil stretches lie at residues 163–266 (NKEV…RLAA) and 312–332 (NLIQ…REEE). Ser-195 carries the phosphoserine modification. In terms of domain architecture, B30.2/SPRY spans 347–545 (YRTSKPEPRT…RIVDLGEEPE (199 aa)).

The protein belongs to the TRIM/RBCC family. As to quaternary structure, homodimerizes via its coiled-coil domain. Heterodimerizes with MID1, TRIM24 and PML. Interacts with Galectin-3/LGALS3 in a ULK1-dependent manner; this interaction mediates autophagy of damage endomembranes. Interacts with BECN1. Interacts with ATG16L1. Interacts with p62/SQSTM and LC3B/MAP1LC3B. In terms of processing, phosphorylated by ULK1. Post-translationally, auto-ubiquitinates via its B-Boxes. As to expression, widely expressed. Expressed in basal keratinocytes.

It localises to the cytoplasm. It carries out the reaction S-ubiquitinyl-[E2 ubiquitin-conjugating enzyme]-L-cysteine + [acceptor protein]-L-lysine = [E2 ubiquitin-conjugating enzyme]-L-cysteine + N(6)-ubiquitinyl-[acceptor protein]-L-lysine.. E3 ubiquitin ligase that plays an essential role in the organization of autophagic response and ubiquitination upon lysosomal and phagosomal damages. Plays a role in the stress-induced biogenesis and degradation of protein aggresomes by regulating the p62-KEAP1-NRF2 signaling and particularly by modulating the ubiquitination levels and thus stability of NRF2. Acts as a scaffold protein and facilitates autophagic degradation of protein aggregates by interacting with p62/SQSTM, ATG16L1 and LC3B/MAP1LC3B. In turn, protects the cell against oxidative stress-induced cell death as a consequence of endomembrane damage. This Mus musculus (Mouse) protein is Tripartite motif-containing protein 16 (Trim16).